Here is a 1182-residue protein sequence, read N- to C-terminus: CRISPR-associated endoribonuclease Cas13a (1182 aa).

The stretch at 132–279 (FNNLIEKVQN…ENNSDNKLKQ (148 aa)) forms a coiled coil. The HEPN-like fold 1 stretch occupies residues 366 to 508 (YIKNTGQLET…NNEEIKGYFI (143 aa)). A coiled-coil region spans residues 896–955 (KVEKENIEDYNKKEEIEQKKKSNIEKLQDLKVELHKKWEQNKITEKEIEKYNNTTRKINE). The HEPN-like fold 2 stretch occupies residues 965 to 1120 (LQNVYLLHEM…QNHILKSTKT (156 aa)).

This sequence belongs to the CRISPR-associated endoribonuclease Cas13a family. Requires a divalent metal cation as cofactor.

Target RNA acts as an activator for non-specific ssRNA degradation. In terms of biological role, CRISPR (clustered regularly interspaced short palindromic repeat), is an adaptive immune system that provides protection against mobile genetic elements (viruses, transposable elements and conjugative plasmids). CRISPR clusters contain sequences complementary to antecedent mobile elements and target invading nucleic acids. Unlike many single-component effectors, this CRISPR-Cas system targets RNA. CRISPR clusters are transcribed from pre-CRISPR RNA (crRNA) and processed into crRNA by this protein. Cleaves linear target ssRNA in a pre-crRNA-dependent fashion, preferentially before U residues. Binding a viable target RNA target activates this protein for non-specific RNA degradation in vitro (called collateral RNA degradation), which is fairly sensitive as it requires picomolar levels of viable target RNA. This Leptotrichia wadei (strain F0279) protein is CRISPR-associated endoribonuclease Cas13a.